The sequence spans 318 residues: MSNCGKHFGPEQLEKWPELESVTLMEALAREDIDEAVYAILFRENCIAKRLDTYFQHLDAFKERKKELLHKKWTENVAKPLQQRIMEKVISYKALEKTKQENFEYFLKHTNKTEIIFGDFYDPEVYNPFYMTKKDPNYGKVAVPPFCDPLFIRQQEIDEEQRAVFQYTTGKRCTLKEFKELEKARQYARLPQFTFSLHSMVSKDRPKAFARPVGSKTHSKCSPEKLVCAEEKFPPYKVKMTSDVNQTVFERRFYSSKISQESKRHEKKGLALGTGQHRPRSWAAGEGQQRRRSQPVDRRVMTAEVLGQHLAALQLGDR.

Residues 259–297 form a disordered region; that stretch reads SQESKRHEKKGLALGTGQHRPRSWAAGEGQQRRRSQPVD.

Belongs to the FAM228 family.

The chain is Protein FAM228A (FAM228A) from Bos taurus (Bovine).